The sequence spans 338 residues: MSDFDSNPFADPDLNNPFKDPSVTQVTRNVPPGLDEYNPFSDSRTPPPGGVKMPNVPNTQPAIMKPTEEHPAYTQIAKEHALAQAELLKRQEELERKAAELDRREREMQNLSQHGRKNNWPPLPSNFPVGPCFYQDFSVDIPVEFQKTVKLMYYLWMFHAVTLFLNIFGCLAWFCVDSARAVDFGLSILWFLLFTPCSFVCWYRPLYGAFRSDSSFRFFVFFFVYICQFAVHVLQAAGFHNWGNCGWISSLTGLNQNIPVGIMMIIIAALFTASAVISLVMFKKVHGLYRTTGASFEKAQQEFATGVMSNKTVQTAAANAASTAASSAAQNAFKGNQI.

The segment at Met1–Met64 is disordered. Residue Ser2 is modified to N-acetylserine. A Phosphoserine modification is found at Ser2. Topologically, residues Ser2–Leu155 are cytoplasmic. Thr45 is modified (phosphothreonine). Residues Trp156 to Val176 form a helical membrane-spanning segment. Residues Asp177–Ala181 lie on the Lumenal side of the membrane. The helical transmembrane segment at Val182–Trp202 threads the bilayer. The Cytoplasmic segment spans residues Tyr203–Phe218. A helical membrane pass occupies residues Phe219–Phe239. The Lumenal segment spans residues His240–Gly261. Residues Ile262–Phe282 traverse the membrane as a helical segment. The Cytoplasmic segment spans residues Lys283 to Ile338.

Belongs to the SCAMP family. As to quaternary structure, interacts with SYNRG and ITSN1. Interacts with SLC9A7. Widely expressed, with highest expression in brain.

The protein localises to the golgi apparatus. It localises to the trans-Golgi network membrane. Its subcellular location is the recycling endosome membrane. Functionally, functions in post-Golgi recycling pathways. Acts as a recycling carrier to the cell surface. The chain is Secretory carrier-associated membrane protein 1 (SCAMP1) from Homo sapiens (Human).